The following is a 430-amino-acid chain: Ribosomal protein uS12 methylthiotransferase RimO (430 aa).

The 117-residue stretch at 2–118 (AKIFTISLGC…IDNVIKRPKH (117 aa)) folds into the MTTase N-terminal domain. [4Fe-4S] cluster-binding residues include Cys-11, Cys-47, Cys-81, Cys-150, Cys-154, and Cys-157. The region spanning 136–368 (LTAPHSAYLK…AQSRVIDSIN (233 aa)) is the Radical SAM core domain. The TRAM domain maps to 369–430 (RKLKGKTVKV…KGYNRTGKII (62 aa)).

It belongs to the methylthiotransferase family. RimO subfamily. [4Fe-4S] cluster serves as cofactor.

It is found in the cytoplasm. The catalysed reaction is L-aspartate(89)-[ribosomal protein uS12]-hydrogen + (sulfur carrier)-SH + AH2 + 2 S-adenosyl-L-methionine = 3-methylsulfanyl-L-aspartate(89)-[ribosomal protein uS12]-hydrogen + (sulfur carrier)-H + 5'-deoxyadenosine + L-methionine + A + S-adenosyl-L-homocysteine + 2 H(+). Its function is as follows. Catalyzes the methylthiolation of an aspartic acid residue of ribosomal protein uS12. The protein is Ribosomal protein uS12 methylthiotransferase RimO of Elusimicrobium minutum (strain Pei191).